We begin with the raw amino-acid sequence, 98 residues long: Omega-hexatoxin-Hr2b (98 aa).

The first 22 residues, 1-22 (MKFSKLSLTLALILTQVLFVLC), serve as a signal peptide directing secretion. The propeptide occupies 24 to 56 (KINEDFMKHGLESQALHDEIRKPIDSENPDTER). Cystine bridges form between cysteine 60/cysteine 74, cysteine 67/cysteine 80, and cysteine 73/cysteine 85. Leucine amide is present on leucine 97.

Belongs to the neurotoxin 15 family. 02 (omega-actx) subfamily. Expressed by the venom gland.

The protein resides in the secreted. Functionally, potent inhibitor of insect, but not mammalian, voltage-gated calcium channels (Cav). In Atrax robustus (Sydney funnel-web spider), this protein is Omega-hexatoxin-Hr2b.